The following is a 234-amino-acid chain: Fibrillarin-like rRNA/tRNA 2'-O-methyltransferase (234 aa).

Residues Thr-91–Thr-92, Glu-110–Phe-111, Asp-137–Ala-138, and Asp-157–Gln-160 contribute to the S-adenosyl-L-methionine site.

The protein belongs to the methyltransferase superfamily. Fibrillarin family. Interacts with nop5. Component of box C/D small ribonucleoprotein (sRNP) particles that contain rpl7ae, FlpA and nop5, plus a guide RNA.

Involved in pre-rRNA and tRNA processing. Utilizes the methyl donor S-adenosyl-L-methionine to catalyze the site-specific 2'-hydroxyl methylation of ribose moieties in rRNA and tRNA. Site specificity is provided by a guide RNA that base pairs with the substrate. Methylation occurs at a characteristic distance from the sequence involved in base pairing with the guide RNA. This chain is Fibrillarin-like rRNA/tRNA 2'-O-methyltransferase, found in Pyrobaculum calidifontis (strain DSM 21063 / JCM 11548 / VA1).